The chain runs to 174 residues: Gamma-crystallin D (174 aa).

Beta/gamma crystallin 'Greek key' domains lie at 2 to 40 and 41 to 83; these read GKIT…RVDS and GCWM…RLIP. Positions 84 to 87 are connecting peptide; it reads HSGS. 2 Beta/gamma crystallin 'Greek key' domains span residues 88 to 128 and 129 to 171; these read HRIR…NVLE and GSWV…RRVI.

Belongs to the beta/gamma-crystallin family. Monomer.

Its function is as follows. Crystallins are the dominant structural components of the vertebrate eye lens. The polypeptide is Gamma-crystallin D (CRYGD) (Homo sapiens (Human)).